The chain runs to 265 residues: MQRYAVGIEFSGIQYRGWQTQQPGVASVQETIERVLSKIADEPITLHGAGRTDAGVHATNMVAHFDTNAIRPERGWIMGANSQLPKDISIQWIKQMDEEFHARFKATARRYRYVVYNAPHRPALLHKQVTHIYQKLDVQKMIKAASKFEGTHNFETFRAAACQSNQPVRHVKHCRLFEHGRYLVLDIQADGFLHHMVRNIMGCLLEIGQGMYEIDHIDAMFAAEDRKAAGITAPPDGLYFIQCYYPEQFDLPHPPLGPHWLNLPE.

Asp-53 (nucleophile) is an active-site residue. Residue Tyr-111 participates in substrate binding.

Belongs to the tRNA pseudouridine synthase TruA family. Homodimer.

It carries out the reaction uridine(38/39/40) in tRNA = pseudouridine(38/39/40) in tRNA. Formation of pseudouridine at positions 38, 39 and 40 in the anticodon stem and loop of transfer RNAs. The protein is tRNA pseudouridine synthase A of Acinetobacter baumannii (strain ATCC 17978 / DSM 105126 / CIP 53.77 / LMG 1025 / NCDC KC755 / 5377).